The following is a 223-amino-acid chain: Cytidylate kinase (223 aa).

10 to 18 (GPAGTGKSS) provides a ligand contact to ATP.

Belongs to the cytidylate kinase family. Type 1 subfamily.

Its subcellular location is the cytoplasm. It carries out the reaction CMP + ATP = CDP + ADP. The enzyme catalyses dCMP + ATP = dCDP + ADP. The chain is Cytidylate kinase from Mycobacterium leprae (strain Br4923).